We begin with the raw amino-acid sequence, 640 residues long: uncharacterized protein (640 aa).

14 consecutive transmembrane segments (helical) span residues 8-28, 52-72, 90-110, 136-156, 179-199, 208-228, 241-261, 277-297, 298-318, 352-372, 391-411, 446-466, 497-517, and 619-639; these read GGVV…LGMF, LGGF…CYLI, LFVA…FLLA, LWYA…LVVL, VFML…LHAW, PSPV…YGIV, WWGL…VLQA, ENMG…DTGA, YGPA…HAAF, TVFF…AGFV, IVAL…GLSV, AIAA…APMV, IAPG…AVLA, and GSVH…LVVA.

It belongs to the complex I subunit 4 family.

Its subcellular location is the cell membrane. This is an uncharacterized protein from Mycobacterium tuberculosis (strain CDC 1551 / Oshkosh).